Reading from the N-terminus, the 239-residue chain is UPF0502 protein Bcen_5249 (239 aa).

The tract at residues 196 to 239 (IRGAKGRTEAPRGRSGATQCAGSTDGERTRHRRRRTGRRVLIAS) is disordered. The segment covering 224 to 233 (TRHRRRRTGR) has biased composition (basic residues).

It belongs to the UPF0502 family.

The sequence is that of UPF0502 protein Bcen_5249 from Burkholderia orbicola (strain AU 1054).